The following is a 92-amino-acid chain: Small ribosomal subunit protein uS19c (92 aa).

The protein belongs to the universal ribosomal protein uS19 family.

It is found in the plastid. The protein localises to the chloroplast. Protein S19 forms a complex with S13 that binds strongly to the 16S ribosomal RNA. In Picea abies (Norway spruce), this protein is Small ribosomal subunit protein uS19c (rps19).